The primary structure comprises 938 residues: MAKTRVHELAKEFGVESKFVLEKFKEMGEFVKSASSTVELPAEMRFRKEYGEKLKAEASAAPAAPAEKPAAKKAPAKKAAATAEPEALAAEPAAEPAAAEAPAAAEAEAPAAKAAAPKPGPKPAPVAEQPAPPAEPEAPEAPEAPAASAAPAAPKAPAPRPVGRPGAPRPGNNPFASSQGMGRRPAPGAPAAPGAGDNRPPRPPAAREGGVPGRPGMPRPNPAMMPKSPSAFGAGPGGRGPARPGAPGRGGAPGRGGAPGRGGVGTGAPGRGGAPGGGFGPSGGGRPGGGRPGQRGQTQGAFGRPGGPSRRGRKSKRARRQEFEAMEAPTIGGIRVRKGNGETVRLPRGASLTDFAERINVEPAQLVQMLFSLGEMVTATESVNDETLELLGEELNYVVEVVSPEDEDRELLESFDIEFADDEDDEGHFEARPPVVTVMGHVDHGKTKLLDALRHANVASGEAGGITQHIGAYQVHTDVDGEDRKITFIDTPGHEAFTAMRARGSQSSDIAVLVVAADDGVMPQTVEALNHAKAAGVPIVVAVNKIDKPEADPTKVRGQLTEYGLVPEEYGGDTMFVDVSAKSELNLDKLLEAVVLTADASLDLRANPNRDAQGLVIEAHLDRGRGPVATILVQRGTLHVGDSIVAGPAHGRVRAMLDEYGNELTEATPSRPAMVLGLSTVPGAGQNFIVVEDDRMARQIAEKREARERAAMQAKRRVRRTLEDFMASMEKGESQELNLILKGDVSGSVEALEDALAKIDVGDDVSLRVIDRGVGAITETNVDLAAASDAIIIGFNVRPQGKATELADREGVEIRYYTVIYQAIEEIEAALKGMLKPEFEESTLGQAEIRAIFRSSKVGNIAGCMVISGVIRRNAKVRVIRDGAVVADNLDLASLKREKDDASEVREGFECGLVLRNFQDIKEGDIVEAFEMREIPRA.

Residues 55 to 322 (KAEASAAPAA…RKSKRARRQE (268 aa)) form a disordered region. Low complexity-rich tracts occupy residues 57–68 (EASAAPAAPAEK) and 77–117 (KKAA…AAAP). The segment covering 118-136 (KPGPKPAPVAEQPAPPAEP) has biased composition (pro residues). Composition is skewed to low complexity over residues 141-153 (APEA…APAA), 180-198 (GMGR…AGDN), and 224-233 (MMPKSPSAFG). Residues 247–293 (PGRGGAPGRGGAPGRGGVGTGAPGRGGAPGGGFGPSGGGRPGGGRPG) are compositionally biased toward gly residues. Over residues 310–319 (RRGRKSKRAR) the composition is skewed to basic residues. Positions 431–603 (ARPPVVTVMG…VVLTADASLD (173 aa)) constitute a tr-type G domain. The tract at residues 440–447 (GHVDHGKT) is G1. Position 440-447 (440-447 (GHVDHGKT)) interacts with GTP. A G2 region spans residues 465-469 (GITQH). Residues 490 to 493 (DTPG) form a G3 region. GTP contacts are provided by residues 490-494 (DTPGH) and 544-547 (NKID). Residues 544 to 547 (NKID) form a G4 region. A G5 region spans residues 580–582 (SAK).

Belongs to the TRAFAC class translation factor GTPase superfamily. Classic translation factor GTPase family. IF-2 subfamily.

It is found in the cytoplasm. In terms of biological role, one of the essential components for the initiation of protein synthesis. Protects formylmethionyl-tRNA from spontaneous hydrolysis and promotes its binding to the 30S ribosomal subunits. Also involved in the hydrolysis of GTP during the formation of the 70S ribosomal complex. The sequence is that of Translation initiation factor IF-2 from Nocardioides sp. (strain ATCC BAA-499 / JS614).